The chain runs to 163 residues: Nucleotide-binding protein HDEF_1968 (163 aa).

This sequence belongs to the YajQ family.

In terms of biological role, nucleotide-binding protein. This is Nucleotide-binding protein HDEF_1968 from Hamiltonella defensa subsp. Acyrthosiphon pisum (strain 5AT).